The sequence spans 421 residues: General transcription factor IIH subunit 2 (421 aa).

Residues M1–W26 form a disordered region. The span at E11–G24 shows a compositional bias: acidic residues. In terms of domain architecture, VWFA spans Y83–I272. An RING-type zinc finger spans residues C362–E408.

This sequence belongs to the GTF2H2 family. As to quaternary structure, component of the 7-subunit TFIIH core complex composed of XPB, XPD, TFB1/GTF2H1, GTF2H2/P44, TFB4/GTF2H3, TFB2/GTF2H4 and TFB5/GTF2H5, which is active in NER. The core complex associates with the 3-subunit CDK-activating kinase (CAK) module composed of CYCH1/cyclin H1, CDKD and MAT1/At4g30820 to form the 10-subunit holoenzyme (holo-TFIIH) active in transcription. Interacts with XPD.

Its subcellular location is the nucleus. Component of the general transcription and DNA repair factor IIH (TFIIH) core complex, which is involved in general and transcription-coupled nucleotide excision repair (NER) of damaged DNA and, when complexed to CAK, in RNA transcription by RNA polymerase II. In NER, TFIIH acts by opening DNA around the lesion to allow the excision of the damaged oligonucleotide and its replacement by a new DNA fragment. In transcription, TFIIH has an essential role in transcription initiation. When the pre-initiation complex (PIC) has been established, TFIIH is required for promoter opening and promoter escape. Phosphorylation of the C-terminal tail (CTD) of the largest subunit of RNA polymerase II by the kinase module CAK controls the initiation of transcription. Can restore UV resistance in the NER-deficient ssl1-1 yeast mutant. The protein is General transcription factor IIH subunit 2 of Arabidopsis thaliana (Mouse-ear cress).